The following is a 204-amino-acid chain: Protein Mis18-alpha (204 aa).

Phosphoserine occurs at positions 13, 16, and 17. Positions 51–149 (PLVFLCARCR…SVEAVESYTL (99 aa)) constitute a Mis18 domain. The Zn(2+) site is built by Cys-56, Cys-59, Cys-112, and Cys-115. A Glycyl lysine isopeptide (Lys-Gly) (interchain with G-Cter in SUMO2) cross-link involves residue Lys-133. Phosphoserine is present on Ser-204.

It belongs to the mis18 family. As to quaternary structure, homodimer, and heterodimer with OIP5/MIS18B. Identified in a complex containing MIS18A, OIP5/MIS18B, MIS18BP1, RBBP7 and RBBP4.

It is found in the nucleus. It localises to the chromosome. The protein resides in the centromere. Functionally, required for recruitment of CENPA to centromeres and normal chromosome segregation during mitosis. The polypeptide is Protein Mis18-alpha (Mis18a) (Mus musculus (Mouse)).